A 469-amino-acid polypeptide reads, in one-letter code: Probable Xaa-Pro aminopeptidase PEPP (469 aa).

Mn(2+)-binding residues include Asp-265, Asp-276, Glu-399, and Glu-439.

The protein belongs to the peptidase M24B family. The cofactor is Mn(2+).

The enzyme catalyses Release of any N-terminal amino acid, including proline, that is linked to proline, even from a dipeptide or tripeptide.. Functionally, catalyzes the removal of a penultimate prolyl residue from the N-termini of peptides. The polypeptide is Probable Xaa-Pro aminopeptidase PEPP (PEPP) (Coccidioides posadasii (strain RMSCC 757 / Silveira) (Valley fever fungus)).